We begin with the raw amino-acid sequence, 133 residues long: Nickel-responsive regulator (133 aa).

The Ni(2+) site is built by H76, H87, H89, and C95.

Belongs to the transcriptional regulatory CopG/NikR family. As to quaternary structure, homotetramer. Requires Ni(2+) as cofactor.

In terms of biological role, transcriptional repressor of the nikABCDE operon. Is active in the presence of excessive concentrations of intracellular nickel. This Escherichia coli (strain SE11) protein is Nickel-responsive regulator.